We begin with the raw amino-acid sequence, 1309 residues long: Putative receptor-type tyrosine-protein phosphatase mosPTP-1 (1309 aa).

Positions Met-1 to Ala-36 are cleaved as a signal peptide. At Ala-37–Ala-572 the chain is on the extracellular side. Asn-60, Asn-107, Asn-162, Asn-257, Asn-353, Asn-389, Asn-455, Asn-501, and Asn-513 each carry an N-linked (GlcNAc...) asparagine glycan. 4 Fibronectin type-III domains span residues Pro-147 to Glu-244, Lys-249 to Val-347, Lys-350 to Ser-449, and Ala-450 to His-553. The helical transmembrane segment at Val-573 to Leu-593 threads the bilayer. The Cytoplasmic portion of the chain corresponds to Trp-594–Ser-1309. 2 consecutive Tyrosine-protein phosphatase domains span residues Phe-656 to Ala-921 and Ile-944 to Met-1196. Residue Cys-862 is the Phosphocysteine intermediate of the active site. Residues Asn-1239–Thr-1269 form a disordered region. Gly residues predominate over residues Gly-1256–Thr-1268.

The protein belongs to the protein-tyrosine phosphatase family. Receptor class subfamily. As to quaternary structure, interacts with C-type lectin mosGCTL-1; the interaction probably mediates the recruitment of West Nile virus particles in complex with C-type lectin mosGCTL-1 to the cell surface. Interacts with C-type lectin mosGCTL-7; the interaction probably mediates the recruitment of Japanese encephalitis virus particles in complex with C-type lectin mosGCTL-7 to the cell surface. In terms of tissue distribution, salivary gland (at protein level). Hemolymph. Low-level expression in midgut.

It localises to the cell membrane. The catalysed reaction is O-phospho-L-tyrosyl-[protein] + H2O = L-tyrosyl-[protein] + phosphate. Functionally, putative protein tyrosine-protein phosphatase. In terms of biological role, (Microbial infection) Facilitates West Nile virus infection in mosquitoes probably via recruiting West Nile virus particles in complex with C-type lectin mosGCTL-1 to the cell surface. (Microbial infection) Facilitates Japanese encephalitis virus infection in mosquitoes probably via recruiting Japanese encephalitis virus particles in complex with C-type lectin mosGCTL-7 to the cell surface. The chain is Putative receptor-type tyrosine-protein phosphatase mosPTP-1 from Aedes aegypti (Yellowfever mosquito).